We begin with the raw amino-acid sequence, 111 residues long: 2Fe-2S ferredoxin (111 aa).

A 2Fe-2S ferredoxin-type domain is found at 1–104; that stretch reads MPKIFFLPHK…DIEVQIPLYN (104 aa). The [2Fe-2S] cluster site is built by C42, C48, C51, and C87.

This sequence belongs to the adrenodoxin/putidaredoxin family. [2Fe-2S] cluster is required as a cofactor.

Functionally, ferredoxin are iron-sulfur proteins that transfer electrons in a wide variety of metabolic reactions. The chain is 2Fe-2S ferredoxin (fdx) from Buchnera aphidicola subsp. Schizaphis graminum (strain Sg).